A 427-amino-acid polypeptide reads, in one-letter code: Putative B3 domain-containing protein Os04g0346900 (427 aa).

2 consecutive DNA-binding regions (TF-B3) follow at residues 25-118 (LVPS…FDTT) and 140-236 (KPQF…FGPN). The disordered stretch occupies residues 253–309 (TGEQQEAPSFSRRKCNNKKKSRFGEDDGNQQEMPCSRKGSGNKGRTSDRETKRMRKT). The span at 263-273 (SRRKCNNKKKS) shows a compositional bias: basic residues. The TF-B3 3 DNA-binding region spans 320 to 427 (WIKKEINEYV…TLWRVDIERC (108 aa)).

It localises to the nucleus. The chain is Putative B3 domain-containing protein Os04g0346900 from Oryza sativa subsp. japonica (Rice).